Here is a 128-residue protein sequence, read N- to C-terminus: Sulfurtransferase TusD (128 aa).

Cysteine 78 acts as the Cysteine persulfide intermediate in catalysis.

This sequence belongs to the DsrE/TusD family. As to quaternary structure, heterohexamer, formed by a dimer of trimers. The hexameric TusBCD complex contains 2 copies each of TusB, TusC and TusD. The TusBCD complex interacts with TusE.

The protein resides in the cytoplasm. In terms of biological role, part of a sulfur-relay system required for 2-thiolation of 5-methylaminomethyl-2-thiouridine (mnm(5)s(2)U) at tRNA wobble positions. Accepts sulfur from TusA and transfers it in turn to TusE. This Buchnera aphidicola subsp. Acyrthosiphon pisum (strain 5A) protein is Sulfurtransferase TusD.